The sequence spans 214 residues: Thymidylate kinase (214 aa).

10–17 contributes to the ATP binding site; sequence GPDGAGKT.

Belongs to the thymidylate kinase family.

It catalyses the reaction dTMP + ATP = dTDP + ADP. Its function is as follows. Phosphorylation of dTMP to form dTDP in both de novo and salvage pathways of dTTP synthesis. This chain is Thymidylate kinase, found in Limosilactobacillus fermentum (strain NBRC 3956 / LMG 18251) (Lactobacillus fermentum).